Here is a 737-residue protein sequence, read N- to C-terminus: Delta and Notch-like epidermal growth factor-related receptor (737 aa).

Residues 1–34 form the signal peptide; that stretch reads MQPRRAQAPGAQLLPALALLLLLLGAGPRGSSLA. At 35-640 the chain is on the extracellular side; sequence NPVPAAPLSA…LTNMPRHSLY (606 aa). EGF-like domains follow at residues 44–92 and 94–133; these read APGP…ANCQ and VADPCASNPCHHGNCSSSSSSSSDGYLCICNEGYEGPNCE. Positions 44 to 133 are interaction with NOTCH1; the sequence is APGPCAAQPC…NEGYEGPNCE (90 aa). 6 disulfide bridges follow: C48/C59, C53/C80, C82/C91, C98/C108, C103/C121, and C123/C132. N-linked (GlcNAc...) asparagine glycosylation is present at N223. EGF-like domains lie at 309–348, 349–390, 392–428, 430–466, and 468–503; these read PGESHANDLECSGKGKCTTKPSEATFSCTCEEQYVGTFCE, EYDA…ELCQ, KIDYCILDPCRNGATCISSLSGFTCQCPEGYFGSACE, KVDPCASSPCQNNGTCYVDGVHFTCNCSPGFTGPTCA, and LIDFCALSPCAHGTCRSVGTSYKCLCDPGYHGLYCE. 23 cysteine pairs are disulfide-bonded: C319–C336, C338–C347, C353–C364, C358–C378, C380–C389, C396–C407, C401–C416, C418–C427, C434–C445, C439–C454, C456–C465, C472–C482, C477–C491, C493–C502, C509–C520, C514–C529, C531–C540, C547–C558, C552–C567, C569–C578, C585–C596, C590–C605, and C607–C616. An EGF-like 8; calcium-binding domain is found at 505–541; it reads EYNECLSAPCLNAATCRDLVNGYECVCLAEYKGTHCE. The EGF-like 9 domain maps to 543–579; that stretch reads YKDPCANVSCLNGATCDSDGLNGTCICAPGFTGEECD. The Follistatin-like domain occupies 546–568; sequence PCANVSCLNGATCDSDGLNGTCI. An N-linked (GlcNAc...) asparagine glycan is attached at N564. The region spanning 581–617 is the EGF-like 10; calcium-binding domain; the sequence is DINECDSNPCHHGGSCLDQPNGYNCHCPHGWVGANCE. The helical transmembrane segment at 641–661 threads the bilayer; that stretch reads IIIGALCVAFILMLIILIVGI. Residues 662–737 are Cytoplasmic-facing; that stretch reads CRISRIEYQG…LVTLIKTKDL (76 aa). An interaction with AP1G1 and somatodendritic targeting region spans residues 677–680; that stretch reads YEEF. S685 is modified (phosphoserine). Residues Y711 and Y721 each carry the phosphotyrosine modification. Position 722 is a phosphoserine (S722).

Interacts with AP1G1. Interacts with NOTCH1. In terms of tissue distribution, expressed in brain, spinal cord and adrenal gland.

It localises to the cell membrane. Activator of the NOTCH1 pathway. May mediate neuron-glia interaction during astrocytogenesis. The chain is Delta and Notch-like epidermal growth factor-related receptor (DNER) from Homo sapiens (Human).